Here is a 771-residue protein sequence, read N- to C-terminus: 5-methyltetrahydropteroyltriglutamate--homocysteine methyltransferase (771 aa).

5-methyltetrahydropteroyltri-L-glutamate-binding positions include 16-19 (RELK) and lysine 117. Residues 443-445 (IGS) and glutamate 496 contribute to the L-homocysteine site. L-methionine is bound by residues 443-445 (IGS) and glutamate 496. 5-methyltetrahydropteroyltri-L-glutamate-binding positions include 527–528 (RC) and tryptophan 573. An L-homocysteine-binding site is contributed by aspartate 611. Residue aspartate 611 participates in L-methionine binding. Glutamate 617 serves as a coordination point for 5-methyltetrahydropteroyltri-L-glutamate. 3 residues coordinate Zn(2+): histidine 653, cysteine 655, and glutamate 677. Histidine 706 acts as the Proton donor in catalysis. Cysteine 738 is a Zn(2+) binding site.

Belongs to the vitamin-B12 independent methionine synthase family. Requires Zn(2+) as cofactor.

The catalysed reaction is 5-methyltetrahydropteroyltri-L-glutamate + L-homocysteine = tetrahydropteroyltri-L-glutamate + L-methionine. The protein operates within amino-acid biosynthesis; L-methionine biosynthesis via de novo pathway; L-methionine from L-homocysteine (MetE route): step 1/1. Functionally, catalyzes the transfer of a methyl group from 5-methyltetrahydrofolate to homocysteine resulting in methionine formation. This Stutzerimonas stutzeri (strain A1501) (Pseudomonas stutzeri) protein is 5-methyltetrahydropteroyltriglutamate--homocysteine methyltransferase.